Here is a 299-residue protein sequence, read N- to C-terminus: HTH-type transcriptional regulator ArgP (299 aa).

An HTH lysR-type domain is found at 2–58 (FDYKLLSALAAVIEQAGFERAAQVLGLSQSAISQRIKLLEARVGQPVLVRVTPPAPT). Positions 19–38 (FERAAQVLGLSQSAISQRIK) form a DNA-binding region, H-T-H motif.

Belongs to the LysR transcriptional regulatory family. Homodimer.

Controls the transcription of genes involved in arginine and lysine metabolism. This chain is HTH-type transcriptional regulator ArgP, found in Pseudomonas fluorescens (strain ATCC BAA-477 / NRRL B-23932 / Pf-5).